The chain runs to 176 residues: RNA pyrophosphohydrolase (176 aa).

The 152-residue stretch at 8 to 159 (PYRTCVGMML…KRPVYERVVK (152 aa)) folds into the Nudix hydrolase domain. Residues 47 to 68 (GGVDPGEDTWAAAKRELYEETS) carry the Nudix box motif.

This sequence belongs to the Nudix hydrolase family. RppH subfamily. Requires a divalent metal cation as cofactor.

In terms of biological role, accelerates the degradation of transcripts by removing pyrophosphate from the 5'-end of triphosphorylated RNA, leading to a more labile monophosphorylated state that can stimulate subsequent ribonuclease cleavage. The protein is RNA pyrophosphohydrolase of Rhodopseudomonas palustris (strain BisA53).